The sequence spans 838 residues: Protein P (838 aa).

Residues 1–179 (MPLSYQHFRK…FCGSPYSWEQ (179 aa)) form a terminal protein domain (TP) region. A spacer region spans residues 180–341 (ELQHSQRHGD…YCLSHLVNLR (162 aa)). Residues 219–245 (GLQPHQGPLASSQPGRSGSIRARAHPS) form a disordered region. A polymerase/reverse transcriptase domain (RT) region spans residues 342-685 (EDWGPCDDHG…YMNLYPVARQ (344 aa)). Residues 352–595 (EHHIRIPRTP…YSLNFMGYII (244 aa)) enclose the Reverse transcriptase domain. Residues D424, D546, and D547 each coordinate Mg(2+).

The protein belongs to the hepadnaviridae P protein family.

It carries out the reaction DNA(n) + a 2'-deoxyribonucleoside 5'-triphosphate = DNA(n+1) + diphosphate. It catalyses the reaction Endonucleolytic cleavage to 5'-phosphomonoester.. Activated by host HSP70 and HSP40 in vitro to be able to bind the epsilon loop of the pgRNA. Because deletion of the RNase H region renders the protein partly chaperone-independent, the chaperones may be needed indirectly to relieve occlusion of the RNA-binding site by this domain. Inhibited by several reverse-transcriptase inhibitors: Lamivudine, Adefovir and Entecavir. In terms of biological role, multifunctional enzyme that converts the viral RNA genome into dsDNA in viral cytoplasmic capsids. This enzyme displays a DNA polymerase activity that can copy either DNA or RNA templates, and a ribonuclease H (RNase H) activity that cleaves the RNA strand of RNA-DNA heteroduplexes in a partially processive 3'- to 5'-endonucleasic mode. Neo-synthesized pregenomic RNA (pgRNA) are encapsidated together with the P protein, and reverse-transcribed inside the nucleocapsid. Initiation of reverse-transcription occurs first by binding the epsilon loop on the pgRNA genome, and is initiated by protein priming, thereby the 5'-end of (-)DNA is covalently linked to P protein. Partial (+)DNA is synthesized from the (-)DNA template and generates the relaxed circular DNA (RC-DNA) genome. After budding and infection, the RC-DNA migrates in the nucleus, and is converted into a plasmid-like covalently closed circular DNA (cccDNA). The activity of P protein does not seem to be necessary for cccDNA generation, and is presumably released from (+)DNA by host nuclear DNA repair machinery. This chain is Protein P, found in Hepatitis B virus genotype A2 subtype adw (isolate Japan/Nishioka/1983) (HBV-A).